A 370-amino-acid polypeptide reads, in one-letter code: Anhydro-N-acetylmuramic acid kinase (370 aa).

12 to 19 is an ATP binding site; the sequence is GTSLDGVD.

The protein belongs to the anhydro-N-acetylmuramic acid kinase family.

It catalyses the reaction 1,6-anhydro-N-acetyl-beta-muramate + ATP + H2O = N-acetyl-D-muramate 6-phosphate + ADP + H(+). Its pathway is amino-sugar metabolism; 1,6-anhydro-N-acetylmuramate degradation. It functions in the pathway cell wall biogenesis; peptidoglycan recycling. Catalyzes the specific phosphorylation of 1,6-anhydro-N-acetylmuramic acid (anhMurNAc) with the simultaneous cleavage of the 1,6-anhydro ring, generating MurNAc-6-P. Is required for the utilization of anhMurNAc either imported from the medium or derived from its own cell wall murein, and thus plays a role in cell wall recycling. In Pectobacterium atrosepticum (strain SCRI 1043 / ATCC BAA-672) (Erwinia carotovora subsp. atroseptica), this protein is Anhydro-N-acetylmuramic acid kinase.